The following is a 182-amino-acid chain: Adenine phosphoribosyltransferase (182 aa).

It belongs to the purine/pyrimidine phosphoribosyltransferase family. In terms of assembly, homodimer.

Its subcellular location is the cytoplasm. It carries out the reaction AMP + diphosphate = 5-phospho-alpha-D-ribose 1-diphosphate + adenine. It functions in the pathway purine metabolism; AMP biosynthesis via salvage pathway; AMP from adenine: step 1/1. In terms of biological role, catalyzes a salvage reaction resulting in the formation of AMP, that is energically less costly than de novo synthesis. This Saccharopolyspora erythraea (strain ATCC 11635 / DSM 40517 / JCM 4748 / NBRC 13426 / NCIMB 8594 / NRRL 2338) protein is Adenine phosphoribosyltransferase.